The chain runs to 676 residues: GRB2-associated-binding protein 2 (676 aa).

Phosphoserine is present on Ser-2. A PH domain is found at 6 to 117 (DVVCTGWLRK…WVQSICQICG (112 aa)). A disordered region spans residues 127–178 (SLRNVSSAGHGPRSSPAELSSSSQHLLRERKSSAPSHSSQPTLFTFEPPVSN). Ser-133, Ser-140, Ser-141, Ser-148, Ser-149, Ser-159, Ser-164, Ser-210, Ser-218, Ser-223, and Ser-264 each carry phosphoserine. The segment covering 140–149 (SSPAELSSSS) has biased composition (low complexity). The span at 159–169 (SAPSHSSQPTL) shows a compositional bias: polar residues. Phosphothreonine is present on Thr-265. The residue at position 266 (Tyr-266) is a Phosphotyrosine. Thr-278 carries the phosphothreonine modification. Phosphoserine occurs at positions 281 and 285. A Phosphothreonine modification is found at Thr-287. Position 293 is a phosphotyrosine (Tyr-293). At Thr-331 the chain carries Phosphothreonine. Positions 341-430 (VATPGDSAIA…RSAESMSDGV (90 aa)) are disordered. An SH3-binding motif is present at residues 351 to 358 (PPPRPPKP). Ser-368 is subject to Phosphoserine. Residues Thr-385 and Thr-391 each carry the phosphothreonine modification. Residue Ser-405 is modified to Phosphoserine. Position 408 is a phosphothreonine (Thr-408). 2 positions are modified to phosphoserine: Ser-422 and Ser-425. A Phosphotyrosine modification is found at Tyr-452. Ser-480 carries the post-translational modification Phosphoserine. The tract at residues 492-531 (PSTTLPVHRGPSRGSEIQPPPVNRNLKPDRKAKPTPLDLR) is disordered. The SH3-binding signature appears at 510-519 (PPPVNRNLKP). Ser-543 is subject to Phosphoserine. Composition is skewed to polar residues over residues 556–577 (FNSS…STDS) and 589–611 (NPVS…STGS). Disordered stretches follow at residues 556-643 (FNSS…KVDY) and 656-676 (NTMQ…GAKL). 2 positions are modified to phosphoserine: Ser-622 and Ser-623. Tyr-643 is modified (phosphotyrosine). Polar residues predominate over residues 656-670 (NTMQEWTDVRQSSEP).

Belongs to the GAB family. Part of a complex composed of EEIG1, TNFRSF11A/RANK, PLCG2, GAB2, TEC and BTK; complex formation increases in the presence of TNFSF11/RANKL. Interacts with SHC1; may mediate interaction with receptors. Interacts with SYK. Interacts with PI-3 kinase. Interacts with GRB2 (via SH3 2 domain). Interacts (phosphorylated) with PTPN11. Interacts with TNFRSF11A (via cytoplasmic domain). Interacts (phosphorylated) with 14-3-3 family proteins SFN, YWHAB, YWHAE, YWHAG, YWHAH, YWHAQ and YWHAZ; prevents interaction with GRB2 and attenuates GAB2 signaling. Interacts with HCK. Post-translationally, phosphorylated on tyrosine residue(s) by the thrombopoietin receptor (TPOR), stem cell factor receptor (SCFR), and T-cell and B-cell antigen receptors, gp130, IL-2R and IL-3R. Phosphorylated upon stimulation of TNFRSF11A/RANK by TNFSF11/RANKL. Phosphorylated upon EGF stimulation. Phosphorylated on tyrosine residues by HCK upon IL6 signaling. Dephosphorylated by PTPN11.

Its subcellular location is the cytoplasm. It is found in the cell membrane. The protein localises to the membrane raft. In terms of biological role, adapter protein which acts downstream of several membrane receptors including cytokine, antigen, hormone, cell matrix and growth factor receptors to regulate multiple signaling pathways. Regulates osteoclast differentiation mediating the TNFRSF11A/RANK signaling. In allergic response, it plays a role in mast cells activation and degranulation through PI-3-kinase regulation. Also involved in the regulation of cell proliferation and hematopoiesis. This Homo sapiens (Human) protein is GRB2-associated-binding protein 2 (GAB2).